Consider the following 418-residue polypeptide: Deubiquitinase and deneddylase Dub1 (418 aa).

Positions 1 to 11 (MLSPTNSTSKT) are enriched in polar residues. Residues 1–23 (MLSPTNSTSKTAPVPPQDSSKPV) form a disordered region. A helical membrane pass occupies residues 40 to 60 (TALVVLLVVVTLGLILLFYSF). The interval 72-145 (TRPSTKEQPT…LPPKAPKPVK (74 aa)) is disordered. The span at 86-141 (VPLPSPPLAVPRPSTPPPPVISRPSMPPAPTPAISPPSTPSAPKPSTPPPLPPKAP) shows a compositional bias: pro residues. Residues His288, Asp305, and Cys358 contribute to the active site.

Belongs to the peptidase C48 family.

The protein localises to the secreted. Its subcellular location is the host cell. It is found in the membrane. Effector proteins function to alter host cell physiology and promote bacterial survival in host tissues. This protease possesses deubiquitinating and deneddylating activities. The chain is Deubiquitinase and deneddylase Dub1 (cdu1) from Chlamydia trachomatis serovar E (strain Sweden2).